Consider the following 439-residue polypeptide: GTPase Der (439 aa).

EngA-type G domains follow at residues 4 to 169 (AMVS…PQEE) and 177 to 352 (IKIA…EEYN). GTP contacts are provided by residues 10–17 (GRPNVGKS), 57–61 (DTGGL), 120–123 (NKVD), 183–190 (GKPNVGKS), 230–234 (DTAGI), and 295–298 (NKWD). In terms of domain architecture, KH-like spans 353–437 (KRITTGLLNN…PIVISTKKRG (85 aa)).

The protein belongs to the TRAFAC class TrmE-Era-EngA-EngB-Septin-like GTPase superfamily. EngA (Der) GTPase family. In terms of assembly, associates with the 50S ribosomal subunit.

GTPase that plays an essential role in the late steps of ribosome biogenesis. In Thermoanaerobacter sp. (strain X514), this protein is GTPase Der.